Here is a 110-residue protein sequence, read N- to C-terminus: Small ribosomal subunit protein bS16 (110 aa).

The disordered stretch occupies residues 87–110 (ARNNPEKAVPRKERKAAAEAAAKK).

It belongs to the bacterial ribosomal protein bS16 family.

The protein is Small ribosomal subunit protein bS16 of Rhodopseudomonas palustris (strain HaA2).